Consider the following 442-residue polypeptide: Alpha-1,6-mannosyl-glycoprotein 2-beta-N-acetylglucosaminyltransferase (442 aa).

Topologically, residues 1-9 are cytoplasmic; that stretch reads MRFRIYKRK. A helical; Signal-anchor for type II membrane protein membrane pass occupies residues 10–29; that stretch reads VLILTLVVAACGFVLWSSNG. Topologically, residues 30–442 are lumenal; that stretch reads RQRKNDALAP…ELCKSYRRLQ (413 aa). Residues asparagine 64 and asparagine 81 are each glycosylated (N-linked (GlcNAc...) asparagine). Residues 118-122 and aspartate 149 each bind substrate; that span reads QVHNR. Cysteine 191 and cysteine 205 are disulfide-bonded. 224–228 serves as a coordination point for substrate; that stretch reads QTKHH. A Mn(2+)-binding site is contributed by aspartate 256. A disulfide bridge links cysteine 278 with cysteine 281. Substrate is bound at residue arginine 293. 3 disulfides stabilise this stretch: cysteine 329–cysteine 352, cysteine 334–cysteine 435, and cysteine 373–cysteine 381. Histidine 369 contacts Mn(2+).

It belongs to the glycosyltransferase 16 (GT16) protein family. As to quaternary structure, homodimer. Requires Mn(2+) as cofactor. In terms of tissue distribution, detected in liver (at protein level). Detected in liver, brain, thymus and spleen.

It localises to the golgi apparatus membrane. The enzyme catalyses an N(4)-{beta-D-GlcNAc-(1-&gt;2)-alpha-D-Man-(1-&gt;3)-[alpha-D-Man-(1-&gt;6)]-beta-D-Man-(1-&gt;4)-beta-D-GlcNAc-(1-&gt;4)-beta-D-GlcNAc}-L-asparaginyl-[protein] + UDP-N-acetyl-alpha-D-glucosamine = N(4)-{beta-D-GlcNAc-(1-&gt;2)-alpha-D-Man-(1-&gt;3)-[beta-D-GlcNAc-(1-&gt;2)-alpha-D-Man-(1-&gt;6)]-beta-D-Man-(1-&gt;4)-beta-D-GlcNAc-(1-&gt;4)-beta-D-GlcNAc}-L-asparaginyl-[protein] + UDP + H(+). The protein operates within protein modification; protein glycosylation. Its function is as follows. Plays an essential role in protein N-glycosylation. Catalyzes the transfer of N-acetylglucosamine (GlcNAc) onto the free terminal mannose moiety in the core structure of the nascent N-linked glycan chain, giving rise to the second branch in complex glycans. The sequence is that of Alpha-1,6-mannosyl-glycoprotein 2-beta-N-acetylglucosaminyltransferase (Mgat2) from Rattus norvegicus (Rat).